The sequence spans 863 residues: Potassium/sodium hyperpolarization-activated cyclic nucleotide-gated channel 2 (863 aa).

Residues 1–10 (MDARGGGGRP) show a composition bias toward gly residues. The interval 1 to 131 (MDARGGGGRP…AGPAGEPRGS (131 aa)) is disordered. The Cytoplasmic segment spans residues 1–188 (MDARGGGGRP…PYSDFRFYWD (188 aa)). A compositionally biased stretch (pro residues) spans 17 to 47 (TPAPGPPPPPPPPAPPQPQPPPAPPPNPTTP). A compositionally biased stretch (low complexity) spans 106–128 (GAASGPAAAEEAGSEEAGPAGEP). Phosphoserine occurs at positions 119 and 134. The interval 131 to 182 (SQASFLQRQFGALLQPGVNKFSLRMFGSQKAVEREQERVKSAGAWIIHPYSD) is involved in subunit assembly. Residues 189-209 (FTMLLFMVGNLIIIPVGITFF) form a helical membrane-spanning segment. Residues 210 to 213 (KDET) lie on the Extracellular side of the membrane. Residues 214 to 234 (TAPWIVFNVVSDTFFLMDLVL) form a helical membrane-spanning segment. The Cytoplasmic portion of the chain corresponds to 235 to 261 (NFRTGIVIEDNTEIILDPEKIKKKYLR). Residues 262 to 282 (TWFVVDFVSSIPVDYIFLIVE) traverse the membrane as a helical segment. Over 283-290 (KGIDSEVY) the chain is Extracellular. A helical; Voltage-sensor membrane pass occupies residues 291-311 (KTARALRIVRFTKILSLLRLL). The Cytoplasmic portion of the chain corresponds to 312–342 (RLSRLIRYIHQWEEIFHMTYDLASAVMRICN). A helical transmembrane segment spans residues 343–363 (LISMMLLLCHWDGCLQFLVPM). Residues 364 to 386 (LQDFPSDCWVSINNMVNHSWSEL) lie on the Extracellular side of the membrane. Residue asparagine 380 is glycosylated (N-linked (GlcNAc...) asparagine). Residues 387-408 (YSFALFKAMSHMLCIGYGRQAP) constitute an intramembrane region (pore-forming). Residues 409 to 413 (ESMTD) lie on the Extracellular side of the membrane. Residues 414 to 434 (IWLTMLSMIVGATCYAMFIGH) form a helical membrane-spanning segment. The Cytoplasmic segment spans residues 435–863 (ATALIQSLDS…SARSRLSSNL (429 aa)). 6 residues coordinate 3',5'-cyclic AMP: glycine 581, glutamate 582, cysteine 584, arginine 591, threonine 592, and arginine 632. Residue serine 641 is modified to Phosphoserine; by PKG/PRKG2. A Phosphoserine modification is found at serine 726. Omega-N-methylarginine is present on arginine 728. The interval 730 to 863 (VRRAPPGPLP…SARSRLSSNL (134 aa)) is disordered. The span at 734 to 755 (PPGPLPPAASPGPPAASPPAAP) shows a compositional bias: pro residues. Serine 743, serine 750, and serine 757 each carry phosphoserine. 2 stretches are compositionally biased toward low complexity: residues 756-765 (SSPRAPRTSP) and 778-834 (PALP…AAPS). Residues serine 840, serine 842, and serine 847 each carry the phosphoserine modification.

Belongs to the potassium channel HCN family. Homotetramer. The channel is composed of a homo- or heterotetrameric complex of pore-forming subunits. Heterotetramer with HCN1. Forms an obligate 4:4 complex with accessory subunit PEX5L. Interacts with KCNE2. In terms of processing, phosphorylation at Ser-641 by PRKG2 shifts the voltage-dependence to more negative voltages, hence counteracting the stimulatory effect of cGMP on gating. Post-translationally, N-glycosylated; required for cell surface trafficking of HCN2. S-palmitoylated. As to expression, highly expressed in neonatal and adult ventricle and in brain. Highly expressed in the pyramidal layer in hippocampus, in anterior dorsal nucleus in thalamus, in the mammillary nucleus in hypothalamus, in red nucleus, in trigeminal mesencephalic, spinal and principal nuclei, in cochlear and trapezoid nuclei and in the dorsal tegemental nucleus.

The protein localises to the cell membrane. It catalyses the reaction Na(+)(in) = Na(+)(out). The enzyme catalyses K(+)(in) = K(+)(out). The catalysed reaction is NH4(+)(in) = NH4(+)(out). Its activity is regulated as follows. Activated by cAMP, and at 10-100 times higher concentrations, also by cGMP. cAMP binding causes a conformation change that leads to the assembly of an active tetramer and channel opening. In the absence of cAMP, the C-terminal region is thought to exert a tonic inhibition on the pore when HCN2 is in a non-tetrameric form. Channel activity is modulated by intracellular chloride ions and pH; acidic pH shifts the activation to more negative voltages. Phosphatidylinositol-4,5- bisphosphate (PIP(2)) acts as a ligand that allosterically opens HCN2 by shifting voltage-dependent channel activation toward depolarized potentials. Inhibited by extracellular cesium ions. Functionally, hyperpolarization-activated ion channel exhibiting weak selectivity for potassium over sodium ions. Contributes to the native pacemaker currents in heart (If) and in neurons (Ih). Can also transport ammonium in the distal nephron. Involved in the initiation of neuropathic pain in sensory neurons. Produces a large instantaneous current. This Rattus norvegicus (Rat) protein is Potassium/sodium hyperpolarization-activated cyclic nucleotide-gated channel 2 (Hcn2).